The primary structure comprises 79 residues: Protein S100-G (79 aa).

Ser2 carries the post-translational modification N-acetylserine. 2 consecutive EF-hand domains span residues 13–48 (IFQK…KASS) and 45–79 (KASS…KLSQ). Positions 26 and 31 each coordinate Ca(2+). Phosphoserine occurs at positions 42 and 47. Ca(2+) is bound by residues Asp58, Asn60, Asp62, Glu64, and Glu69.

Belongs to the S-100 family.

The sequence is that of Protein S100-G (S100g) from Rattus norvegicus (Rat).